Here is a 212-residue protein sequence, read N- to C-terminus: Adenylate kinase (212 aa).

Residue 10–15 (GAGKGT) coordinates ATP. The NMP stretch occupies residues 30 to 59 (STGDMFRAAMANQTEMGTLAKSFIDKGELV). Residues T31, R36, 57 to 59 (ELV), 86 to 89 (GYPR), and Q93 contribute to the AMP site. The segment at 127–159 (GRIINRKTGETYHKVFNPPADYNEDDYYQREDD) is LID. Residues R128 and 137–138 (TY) contribute to the ATP site. AMP is bound by residues R156 and R167. ATP is bound at residue Q195.

This sequence belongs to the adenylate kinase family. As to quaternary structure, monomer.

It localises to the cytoplasm. The catalysed reaction is AMP + ATP = 2 ADP. It functions in the pathway purine metabolism; AMP biosynthesis via salvage pathway; AMP from ADP: step 1/1. In terms of biological role, catalyzes the reversible transfer of the terminal phosphate group between ATP and AMP. Plays an important role in cellular energy homeostasis and in adenine nucleotide metabolism. The polypeptide is Adenylate kinase (Streptococcus mutans serotype c (strain ATCC 700610 / UA159)).